The primary structure comprises 307 residues: Protein phosphatase EYA (307 aa).

The tract at residues 1–15 (MNNDTSKKLGTLVSD) is necessary for optimum phosphatase activity. Asp25 serves as the catalytic Nucleophile. Mg(2+)-binding residues include Asp25, Asp27, and Asp253. Asp27 serves as the catalytic Proton donor.

The protein belongs to the HAD-like hydrolase superfamily. EYA family. It depends on Mg(2+) as a cofactor.

It catalyses the reaction O-phospho-L-tyrosyl-[protein] + H2O = L-tyrosyl-[protein] + phosphate. With respect to regulation, inhibited by EDTA. Functionally, possesses phosphatase activity toward para-nitrophenyl phosphate (pNPP) in vitro. Possesses phosphatase activity toward several phosphotyrosine-containing peptides in vitro, with low peptide substrate specificity. The protein is Protein phosphatase EYA of Arabidopsis thaliana (Mouse-ear cress).